The following is a 291-amino-acid chain: Prolyl 4-hydroxylase 5 (291 aa).

Over 1 to 22 (MASKSKQHLRYQPRKSVSRSTQ) the chain is Cytoplasmic. Residues 23-43 (AFTVLILLLVVILILLGLGIL) traverse the membrane as a helical; Signal-anchor for type II membrane protein segment. The Extracellular portion of the chain corresponds to 44 to 291 (SLPNANRNSS…KWFHVHEFKV (248 aa)). N-linked (GlcNAc...) asparagine glycosylation occurs at N51. The region spanning 163-286 (NGEGLQVLHY…KWSSTKWFHV (124 aa)) is the Fe2OG dioxygenase domain. Fe cation contacts are provided by H181 and D183. N-linked (GlcNAc...) asparagine glycosylation occurs at N222. H267 is a Fe cation binding site. K277 is a binding site for 2-oxoglutarate.

It belongs to the P4HA family. The cofactor is Fe(2+). It depends on L-ascorbate as a cofactor. In terms of tissue distribution, expressed in epidermal root hair cells (trichoblasts).

The protein resides in the endoplasmic reticulum membrane. It localises to the golgi apparatus membrane. The catalysed reaction is L-prolyl-[collagen] + 2-oxoglutarate + O2 = trans-4-hydroxy-L-prolyl-[collagen] + succinate + CO2. Functionally, catalyzes the post-translational formation of 4-hydroxyproline in -Xaa-Pro-Gly- sequences in proline-rich peptide sequences of plant glycoproteins and other proteins. Hydroxyprolines are important constituent of many plant cell wall glycoproteins such as extensins, hydroxyproline-rich glycoproteins, lectins and arabinogalactan proteins. Possesses high affinity for leucine-rich repeat and proline-rich extensins of root cell walls that are essential for root hair development. Hydroxyprolines define the subsequent O-glycosylation sites by arabinosyltransferases which elongate the O-arabinosides on extensins. This Arabidopsis thaliana (Mouse-ear cress) protein is Prolyl 4-hydroxylase 5.